The primary structure comprises 212 residues: Orotate phosphoribosyltransferase (212 aa).

Residues R97, K101, H103, and 123–131 contribute to the 5-phospho-alpha-D-ribose 1-diphosphate site; that span reads EDLISTGGS. S127 lines the orotate pocket.

The protein belongs to the purine/pyrimidine phosphoribosyltransferase family. PyrE subfamily. In terms of assembly, homodimer. Requires Mg(2+) as cofactor.

It catalyses the reaction orotidine 5'-phosphate + diphosphate = orotate + 5-phospho-alpha-D-ribose 1-diphosphate. Its pathway is pyrimidine metabolism; UMP biosynthesis via de novo pathway; UMP from orotate: step 1/2. Functionally, catalyzes the transfer of a ribosyl phosphate group from 5-phosphoribose 1-diphosphate to orotate, leading to the formation of orotidine monophosphate (OMP). This chain is Orotate phosphoribosyltransferase, found in Bacteroides fragilis (strain ATCC 25285 / DSM 2151 / CCUG 4856 / JCM 11019 / LMG 10263 / NCTC 9343 / Onslow / VPI 2553 / EN-2).